Here is a 308-residue protein sequence, read N- to C-terminus: Glucan 1,3-beta-glucosidase ARB_02797 (308 aa).

The N-terminal stretch at 1 to 20 (MRFSTALSLALAVSPAAVFA) is a signal peptide. E120 functions as the Proton donor in the catalytic mechanism. N126 carries N-linked (GlcNAc...) asparagine glycosylation. E220 serves as the catalytic Nucleophile.

Belongs to the glycosyl hydrolase 17 family.

It localises to the secreted. The protein localises to the cell wall. The protein resides in the cytoplasm. The catalysed reaction is Successive hydrolysis of beta-D-glucose units from the non-reducing ends of (1-&gt;3)-beta-D-glucans, releasing alpha-glucose.. Its function is as follows. Cell wall glucan 1,3-beta-glucosidase involved in cell wall biosynthesis and virulence. Crucial for delivery of beta-1,3-glucan to the biofilm matrix and for accumulation of mature matrix biomass. This is Glucan 1,3-beta-glucosidase ARB_02797 from Arthroderma benhamiae (strain ATCC MYA-4681 / CBS 112371) (Trichophyton mentagrophytes).